The primary structure comprises 183 residues: Capsid protein (183 aa).

The disordered stretch occupies residues 136-183 (NAPILSTLPETTVVRRRGRSPRRRTPSPRRRRSQSPRRRRSQSRESQC). Residues 149–176 (VRRRGRSPRRRTPSPRRRRSQSPRRRRS) are compositionally biased toward basic residues. A phosphoserine; by host mark is found at serine 155, serine 162, and serine 170. One copy of the 1; half-length repeat lies at 155 to 161 (SPRRRTP). The segment at 155-177 (SPRRRTPSPRRRRSQSPRRRRSQ) is 3 X 8 AA repeats of S-P-R-R-R-[PR]-S-Q. Positions 158 to 175 (RRTPSPRRRRSQSPRRRR) match the Bipartite nuclear localization signal motif. 2 tandem repeats follow at residues 162–169 (SPRRRRSQ) and 170–177 (SPRRRRSQ). An RNA binding region spans residues 177 to 183 (QSRESQC).

It belongs to the orthohepadnavirus core antigen family. In terms of assembly, homodimerizes, then multimerizes. Interacts with cytosol exposed regions of viral L glycoprotein present in the reticulum-to-Golgi compartment. Interacts with human FLNB. Phosphorylated form interacts with host importin alpha; this interaction depends on the exposure of the NLS, which itself depends upon genome maturation and/or phosphorylation of the capsid protein. Interacts with host NUP153. Post-translationally, phosphorylated by host SRPK1, SRPK2, and maybe protein kinase C or GAPDH. Phosphorylation is critical for pregenomic RNA packaging. Protein kinase C phosphorylation is stimulated by HBx protein and may play a role in transport of the viral genome to the nucleus at the late step during the viral replication cycle.

It localises to the virion. It is found in the host cytoplasm. In terms of biological role, self assembles to form an icosahedral capsid. Most capsids appear to be large particles with an icosahedral symmetry of T=4 and consist of 240 copies of capsid protein, though a fraction forms smaller T=3 particles consisting of 180 capsid proteins. Entering capsids are transported along microtubules to the nucleus. Phosphorylation of the capsid is thought to induce exposure of nuclear localization signal in the C-terminal portion of the capsid protein that allows binding to the nuclear pore complex via the importin (karyopherin-) alpha and beta. Capsids are imported in intact form through the nuclear pore into the nuclear basket, where it probably binds NUP153. Only capsids that contain the mature viral genome can release the viral DNA and capsid protein into the nucleoplasm. Immature capsids get stuck in the basket. Capsids encapsulate the pre-genomic RNA and the P protein. Pre-genomic RNA is reverse-transcribed into DNA while the capsid is still in the cytoplasm. The capsid can then either be directed to the nucleus, providing more genomes for transcription, or bud through the endoplasmic reticulum to provide new virions. This is Capsid protein from Hepatitis B virus genotype D subtype ayw (isolate France/Tiollais/1979) (HBV-D).